We begin with the raw amino-acid sequence, 536 residues long: Ecdysone receptor (536 aa).

A modulating region spans residues 1-114 (MKTENLIVTT…GPVPRQQEEL (114 aa)). Residues 77 to 107 (SPNSKLDDGNMSVHMGDGLDGKKSSSKKGPV) form a disordered region. 2 NR C4-type zinc fingers span residues 115–135 (CLVC…CEGC) and 151–175 (CKFG…LKKC). The nuclear receptor DNA-binding region spans 115 to 187 (CLVCGDRASG…VGMRPECVVP (73 aa)). The NR LBD domain maps to 278–514 (NQVAVIYKLI…FLEEVWDVGD (237 aa)).

It belongs to the nuclear hormone receptor family. NR1 subfamily.

The protein resides in the nucleus. Receptor for ecdysone. Binds to ecdysone response elements (ECRES). The polypeptide is Ecdysone receptor (EcR) (Chironomus tentans (Midge)).